The following is a 177-amino-acid chain: Large ribosomal subunit protein uL6 (177 aa).

The protein belongs to the universal ribosomal protein uL6 family. In terms of assembly, part of the 50S ribosomal subunit.

This protein binds to the 23S rRNA, and is important in its secondary structure. It is located near the subunit interface in the base of the L7/L12 stalk, and near the tRNA binding site of the peptidyltransferase center. This Glaesserella parasuis serovar 5 (strain SH0165) (Haemophilus parasuis) protein is Large ribosomal subunit protein uL6.